Consider the following 360-residue polypeptide: Uroporphyrinogen decarboxylase (360 aa).

Residues 31–35 (RQAGR), D81, Y157, T212, and H333 each bind substrate.

It belongs to the uroporphyrinogen decarboxylase family. As to quaternary structure, homodimer.

It is found in the cytoplasm. The enzyme catalyses uroporphyrinogen III + 4 H(+) = coproporphyrinogen III + 4 CO2. It functions in the pathway porphyrin-containing compound metabolism; protoporphyrin-IX biosynthesis; coproporphyrinogen-III from 5-aminolevulinate: step 4/4. Its function is as follows. Catalyzes the decarboxylation of four acetate groups of uroporphyrinogen-III to yield coproporphyrinogen-III. This Herminiimonas arsenicoxydans protein is Uroporphyrinogen decarboxylase.